The following is a 190-amino-acid chain: Elongation factor P-like protein (190 aa).

The protein belongs to the elongation factor P family.

The sequence is that of Elongation factor P-like protein from Pseudoalteromonas translucida (strain TAC 125).